A 466-amino-acid polypeptide reads, in one-letter code: Cysteine--tRNA ligase (466 aa).

Cys-28 is a Zn(2+) binding site. The 'HIGH' region signature appears at Pro-30–Asn-40. The Zn(2+) site is built by Cys-208, His-233, and Glu-237. Positions Lys-265–Ser-269 match the 'KMSKS' region motif. Residue Lys-268 coordinates ATP. Ser-269 carries the post-translational modification Phosphoserine.

This sequence belongs to the class-I aminoacyl-tRNA synthetase family. Monomer. The cofactor is Zn(2+).

The protein localises to the cytoplasm. The enzyme catalyses tRNA(Cys) + L-cysteine + ATP = L-cysteinyl-tRNA(Cys) + AMP + diphosphate. The protein is Cysteine--tRNA ligase of Shouchella clausii (strain KSM-K16) (Alkalihalobacillus clausii).